The sequence spans 664 residues: Tripartite terminase subunit 1 (664 aa).

A C3H1-type zinc finger spans residues 205-233; it reads CHVCFEELCVTANQGATASRRLAGKICDH. Disordered regions lie at residues 273–295 and 440–466; these read SKMTEANSGGPAEAPGPAAAQER and HAAEDPPGDGNAEKEARRAPSLGGGPE. Residues 281–292 show a composition bias toward low complexity; it reads GGPAEAPGPAAA.

It belongs to the herpesviridae TRM1 protein family. As to quaternary structure, associates with TRM2 and TRM3 to form the tripartite terminase complex. Interacts with portal protein.

The protein resides in the host nucleus. Its function is as follows. Component of the molecular motor that translocates viral genomic DNA in empty capsid during DNA packaging. Forms a tripartite terminase complex together with TRM2 and TRM3 in the host cytoplasm. Once the complex reaches the host nucleus, it interacts with the capsid portal vertex. This portal forms a ring in which genomic DNA is translocated into the capsid. TRM1 carries an endonuclease activity that plays an important role for the cleavage of concatemeric viral DNA into unit length genomes. The polypeptide is Tripartite terminase subunit 1 (Bos taurus (Bovine)).